The sequence spans 194 residues: Der GTPase-activating protein YihI (194 aa).

A disordered region spans residues Met1–Gly81. Composition is skewed to basic and acidic residues over residues Arg9–Pro23 and Thr36–Glu47. Residues Gly59–Ala70 show a composition bias toward polar residues.

It belongs to the YihI family. In terms of assembly, interacts with Der.

A GTPase-activating protein (GAP) that modifies Der/EngA GTPase function. May play a role in ribosome biogenesis. This chain is Der GTPase-activating protein YihI, found in Haemophilus ducreyi (strain 35000HP / ATCC 700724).